Consider the following 238-residue polypeptide: 7-cyano-7-deazaguanine synthase (238 aa).

15–25 serves as a coordination point for ATP; sequence FSGGQDSTTCL. Zn(2+) is bound by residues Cys203, Cys218, Cys221, and Cys224.

The protein belongs to the QueC family. It depends on Zn(2+) as a cofactor.

The enzyme catalyses 7-carboxy-7-deazaguanine + NH4(+) + ATP = 7-cyano-7-deazaguanine + ADP + phosphate + H2O + H(+). It functions in the pathway purine metabolism; 7-cyano-7-deazaguanine biosynthesis. Its function is as follows. Catalyzes the ATP-dependent conversion of 7-carboxy-7-deazaguanine (CDG) to 7-cyano-7-deazaguanine (preQ(0)). This chain is 7-cyano-7-deazaguanine synthase, found in Alkalilimnicola ehrlichii (strain ATCC BAA-1101 / DSM 17681 / MLHE-1).